A 150-amino-acid chain; its full sequence is C-C motif chemokine 25 (150 aa).

The first 23 residues, 1 to 23 (MNLWLLACLVAGFLGAWAPAVHT), serve as a signal peptide directing secretion. 2 disulfide bridges follow: cysteine 30–cysteine 58 and cysteine 31–cysteine 75.

Belongs to the intercrine beta (chemokine CC) family. Specifically expressed by thymic dendritic cells. High levels in thymus and small intestine.

The protein resides in the secreted. Its function is as follows. Potentially involved in T-cell development. Recombinant protein shows chemotactic activity on thymocytes, macrophages, THP-1 cells, and dendritics cells but is inactive on peripheral blood lymphocytes and neutrophils. Binds to CCR9. Isoform 2 is an antagonist of isoform 1. Binds to atypical chemokine receptor ACKR4 and mediates the recruitment of beta-arrestin (ARRB1/2) to ACKR4. The chain is C-C motif chemokine 25 (CCL25) from Homo sapiens (Human).